The primary structure comprises 864 residues: Mitochondrial 15S rRNA processing factor CCM1 (864 aa).

A mitochondrion-targeting transit peptide spans 1-76; sequence MYMARCGPKN…REFSNTLKER (76 aa). Polar residues-rich tracts occupy residues 80–94 and 102–112; these read TKSV…NSIA and NVNVTKTSSVP. A disordered region spans residues 80–117; sequence TKSVNSDGHQSNSIAPISEDSRNVNVTKTSSVPNEEKS. 2 PPR repeats span residues 319 to 353 and 356 to 390; these read NKQN…STKH and DICT…NIKP.

The protein belongs to the CCM1 family. In terms of assembly, binds to mitochondrial small subunit 15S rRNA.

Its subcellular location is the mitochondrion. Functionally, regulates mitochondrial small subunit maturation by controlling 15S rRNA 5'-end processing. Localizes to the 5' precursor of the 15S rRNA in a position that is subsequently occupied by mS47 in the mature yeast mtSSU. Uses structure and sequence-specific RNA recognition, binding to a single-stranded region of the precursor and specifically recognizing bases -6 to -1. The exchange of Ccm1 for mS47 is coupled to the irreversible removal of precursor rRNA that is accompanied by conformational changes of the mitoribosomal proteins uS5m and mS26. These conformational changes signal completion of 5'-end rRNA processing through protection of the mature 5'-end of the 15S rRNA and stabilization of mS47. The removal of the 5' precursor together with the dissociation of Ccm1 may be catalyzed by the 5'-3' exoribonuclease Pet127. Involved in the specific removal of group I introns in mitochondrial encoded transcripts. This is Mitochondrial 15S rRNA processing factor CCM1 from Saccharomyces cerevisiae (strain ATCC 204508 / S288c) (Baker's yeast).